Reading from the N-terminus, the 153-residue chain is Small ribosomal subunit protein bS16 (153 aa).

Residues 121–131 (AEAAAKAKAEA) show a composition bias toward basic and acidic residues. The tract at residues 121-153 (AEAAAKAKAEAEAAAAAEEAPAEEAAEEAPAED) is disordered. Residues 140–153 (APAEEAAEEAPAED) are compositionally biased toward acidic residues.

Belongs to the bacterial ribosomal protein bS16 family.

This chain is Small ribosomal subunit protein bS16, found in Bifidobacterium longum (strain DJO10A).